Here is a 166-residue protein sequence, read N- to C-terminus: Large ribosomal subunit protein uL10 (166 aa).

It belongs to the universal ribosomal protein uL10 family. In terms of assembly, part of the ribosomal stalk of the 50S ribosomal subunit. The N-terminus interacts with L11 and the large rRNA to form the base of the stalk. The C-terminus forms an elongated spine to which L12 dimers bind in a sequential fashion forming a multimeric L10(L12)X complex.

Forms part of the ribosomal stalk, playing a central role in the interaction of the ribosome with GTP-bound translation factors. In Shewanella baltica (strain OS223), this protein is Large ribosomal subunit protein uL10.